We begin with the raw amino-acid sequence, 161 residues long: Peroxynitrite isomerase 1 (161 aa).

The GXWXGXG motif lies at 17-23; sequence GTWTGRG. Heme b is bound at residue H152.

It belongs to the nitrobindin family. In terms of assembly, homodimer. It depends on heme b as a cofactor.

It catalyses the reaction peroxynitrite = nitrate. Its pathway is nitrogen metabolism. In terms of biological role, heme-binding protein able to scavenge peroxynitrite and to protect free L-tyrosine against peroxynitrite-mediated nitration, by acting as a peroxynitrite isomerase that converts peroxynitrite to nitrate. Therefore, this protein likely plays a role in peroxynitrite sensing and in the detoxification of reactive nitrogen and oxygen species (RNS and ROS, respectively). Is able to bind nitric oxide (NO) in vitro, but may act as a sensor of peroxynitrite levels in vivo. This chain is Peroxynitrite isomerase 1, found in Mycolicibacterium paratuberculosis (strain ATCC BAA-968 / K-10) (Mycobacterium paratuberculosis).